The primary structure comprises 178 residues: ATP synthase subunit delta (178 aa).

Belongs to the ATPase delta chain family. As to quaternary structure, F-type ATPases have 2 components, F(1) - the catalytic core - and F(0) - the membrane proton channel. F(1) has five subunits: alpha(3), beta(3), gamma(1), delta(1), epsilon(1). F(0) has three main subunits: a(1), b(2) and c(10-14). The alpha and beta chains form an alternating ring which encloses part of the gamma chain. F(1) is attached to F(0) by a central stalk formed by the gamma and epsilon chains, while a peripheral stalk is formed by the delta and b chains.

It is found in the cell inner membrane. Its function is as follows. F(1)F(0) ATP synthase produces ATP from ADP in the presence of a proton or sodium gradient. F-type ATPases consist of two structural domains, F(1) containing the extramembraneous catalytic core and F(0) containing the membrane proton channel, linked together by a central stalk and a peripheral stalk. During catalysis, ATP synthesis in the catalytic domain of F(1) is coupled via a rotary mechanism of the central stalk subunits to proton translocation. Functionally, this protein is part of the stalk that links CF(0) to CF(1). It either transmits conformational changes from CF(0) to CF(1) or is implicated in proton conduction. The protein is ATP synthase subunit delta of Azotobacter vinelandii (strain DJ / ATCC BAA-1303).